We begin with the raw amino-acid sequence, 600 residues long: Estrogen receptor (600 aa).

The interval 1–189 (MTMTLHTKAS…IMESAKETRY (189 aa)) is modulating (transactivation AF-1); mediates interaction with MACROD1. S10 carries an O-linked (GlcNAc) serine glycan. Residues 35 to 47 (MERALGEVYVDNS) form a required for interaction with NCOA1 region. The interval 35–179 (MERALGEVYV…LSSSSEKGNM (145 aa)) is interaction with DDX5; self-association. A phosphoserine; by CDK2 mark is found at S109 and S111. At S123 the chain carries Phosphoserine. The tract at residues 148–177 (DTGPPAFYRSNSDNRRQNGRERLSSSSEKG) is disordered. Residues 159-170 (SDNRRQNGRERL) show a composition bias toward basic and acidic residues. Phosphoserine; by CK2 is present on S172. 2 consecutive NR C4-type zinc fingers follow at residues 190–210 (CAVC…CEGC) and 226–250 (CPAT…LRKC). Positions 190–255 (CAVCNDYASG…RLRKCYEVGM (66 aa)) form a DNA-binding region, nuclear receptor. A mediates interaction with DNTTIP2 region spans residues 190–315 (CAVCNDYASG…TKKNSPALSL (126 aa)). A hinge region spans residues 256–315 (MKGGIRKDRRGGRMLKHKRQRDDLEGRNEMGTSGDMRAANLWPSPLVIKHTKKNSPALSL). Position 265 is an asymmetric dimethylarginine; by PRMT1 (R265). The interval 267-600 (GRMLKHKRQR…PEAEGFPNTI (334 aa)) is interaction with AKAP13. The tract at residues 269 to 600 (MLKHKRQRDD…PEAEGFPNTI (332 aa)) is self-association. The NR LBD domain maps to 316 to 552 (TADQMVSALL…DLLLEMLDAH (237 aa)). Residues 316 to 600 (TADQMVSALL…PEAEGFPNTI (285 aa)) are transactivation AF-2. The 17beta-estradiol site is built by E358 and R399. A lipid anchor (S-palmitoyl cysteine) is attached at C452. Residue H529 coordinates 17beta-estradiol. Position 542 is a phosphotyrosine; by Tyr-kinases (Y542). Positions 558-581 (ASRMGVPPEEPSQSQLTTTSSTSA) are disordered. A compositionally biased stretch (low complexity) spans 569–581 (SQSQLTTTSSTSA). Residue T576 is glycosylated (O-linked (GlcNAc) threonine).

This sequence belongs to the nuclear hormone receptor family. NR3 subfamily. As to quaternary structure, interacts with BCAS3. Binds DNA as a homodimer. Can form a heterodimer with ESR2. Interacts with coactivator NCOA5. Interacts with PELP1, the interaction is enhanced by 17-beta-estradiol; the interaction increases ESR1 transcriptional activity. Interacts with NCOA7; the interaction is ligand-inducible. Interacts with AKAP13, CUEDC2, HEXIM1, KDM5A, MAP1S, SMARD1, and UBE1C. Interacts with MUC1; the interaction is stimulated by 7 beta-estradiol (E2) and enhances ESR1-mediated transcription. Interacts with DNTTIP2, and UIMC1. Interacts with KMT2D/MLL2. Interacts with ATAD2; the interaction is enhanced by estradiol. Interacts with KIF18A and LDB1. Interacts with RLIM (via its C-terminus). Interacts with MACROD1. Interacts with SH2D4A and PLCG. Interacts with SH2D4A; the interaction blocks binding to PLCG and inhibits estrogen-induced cell proliferation. Interacts with DYNLL1. Interacts with CCDC62; the interaction requires estradiol and appears to enhance the transcription of target genes. Interacts with NR2C1; the interaction prevents homodimerization of ESR1 and suppresses its transcriptional activity and cell growth. Interacts with DNAAF4. Interacts with PRMT2. Interacts with RBFOX2. Interacts with EP300; the interaction is estrogen-dependent and enhanced by CITED1. Interacts with CITED1; the interaction is estrogen-dependent. Interacts with FAM120B, FOXL2, PHB2 and SLC30A9. Interacts with coactivators NCOA3 and NCOA6. Interacts with STK3/MST2 only in the presence of SAV1 and vice-versa. Binds to CSNK1D. Interacts with NCOA2; NCOA2 can interact with ESR1 AF-1 and AF-2 domains simultaneously and mediate their transcriptional synergy. Interacts with DDX5. Interacts with NCOA1; the interaction seems to require a self-association of N-terminal and C-terminal regions. Interacts with ZNF366, DDX17, NFKB1, RELA, SP1 and SP3. Interacts with NRIP1. Interacts with GPER1; the interaction occurs in an estrogen-dependent manner. Interacts with TRIP4 (ufmylated); estrogen dependent. Interacts with LMTK3; the interaction phosphorylates ESR1 (in vitro) and protects it against proteasomal degradation. Interacts with CCAR2 (via N-terminus) in a ligand-independent manner. Interacts with ZFHX3. Interacts with SFR1 in a ligand-dependent and -independent manner. Interacts with DCAF13, LATS1 and DCAF1; regulates ESR1 ubiquitination and ubiquitin-mediated proteasomal degradation. Interacts (via DNA-binding domain) with POU4F2 (C-terminus); this interaction increases the estrogen receptor ESR1 transcriptional activity in a DNA- and ligand 17-beta-estradiol-independent manner. Interacts with ESRRB isoform 1. Interacts with UBE3A and WBP2. Interacts with GTF2B. Interacts with RBM39. In the absence of hormonal ligand, interacts with TACC1. Interacts with PI3KR1 or PI3KR2 and PTK2/FAK1. Interacts with SRC. Interacts with BAG1; the interaction is promoted in the absence of estradiol (17-beta-estradiol/E2). Interacts with and ubiquitinated by STUB1; the interaction is promoted in the absence of estradiol (17-beta-estradiol/E2). Interacts with NEDD8. Phosphorylated by cyclin A/CDK2 and CK1. Phosphorylation probably enhances transcriptional activity. Dephosphorylation at Ser-123 by PPP5C inhibits its transactivation activity. Phosphorylated by LMTK3 (in vitro). In terms of processing, ubiquitinated; regulated by LATS1 via DCAF1 it leads to ESR1 proteasomal degradation. Deubiquitinated by OTUB1. Ubiquitinated by STUB1/CHIP; in the CA1 hippocampal region following loss of endogenous circulating estradiol (17-beta-estradiol/E2). Ubiquitinated by UBR5, leading to its degradation: UBR5 specifically recognizes and binds ligand-bound ESR1 when it is not associated with coactivators (NCOAs). In presence of NCOAs, the UBR5-degron is not accessible, preventing its ubiquitination and degradation. Post-translationally, palmitoylated at Cys-452 by ZDHHC7 and ZDHHC21. This modification is required for plasma membrane targeting and for rapid intracellular signaling via ERK and AKT kinases and cAMP generation, but not for signaling mediated by the nuclear hormone receptor. Dimethylated by PRMT1 at Arg-265. The methylation may favor cytoplasmic localization. Demethylated by JMJD6 at Arg-265. As to expression, expressed in the CA1 region of the hippocampus, expression decreases with age (at protein level). Expressed in the uterus (at protein level).

The protein resides in the nucleus. It is found in the cytoplasm. It localises to the golgi apparatus. The protein localises to the cell membrane. Its function is as follows. Nuclear hormone receptor. The steroid hormones and their receptors are involved in the regulation of eukaryotic gene expression and affect cellular proliferation and differentiation in target tissues. Ligand-dependent nuclear transactivation involves either direct homodimer binding to a palindromic estrogen response element (ERE) sequence or association with other DNA-binding transcription factors, such as AP-1/c-Jun, c-Fos, ATF-2, Sp1 and Sp3, to mediate ERE-independent signaling. Ligand binding induces a conformational change allowing subsequent or combinatorial association with multiprotein coactivator complexes through LXXLL motifs of their respective components. Mutual transrepression occurs between the estrogen receptor (ER) and NF-kappa-B in a cell-type specific manner. Decreases NF-kappa-B DNA-binding activity and inhibits NF-kappa-B-mediated transcription from the IL6 promoter and displace RELA/p65 and associated coregulators from the promoter. Recruited to the NF-kappa-B response element of the CCL2 and IL8 promoters and can displace CREBBP. Present with NF-kappa-B components RELA/p65 and NFKB1/p50 on ERE sequences. Can also act synergistically with NF-kappa-B to activate transcription involving respective recruitment adjacent response elements; the function involves CREBBP. Can activate the transcriptional activity of TFF1. Also mediates membrane-initiated estrogen signaling involving various kinase cascades. Essential for MTA1-mediated transcriptional regulation of BRCA1 and BCAS3. Maintains neuronal survival in response to ischemic reperfusion injury when in the presence of circulating estradiol (17-beta-estradiol/E2). The polypeptide is Estrogen receptor (Esr1) (Rattus norvegicus (Rat)).